A 314-amino-acid chain; its full sequence is Olfactory receptor 1C1 (314 aa).

Residues 1–25 (MEKRNLTVVREFVLLGLPSSAEQQH) are Extracellular-facing. A helical transmembrane segment spans residues 26–49 (LLSVLFLCMYLATTLGNMLIIATI). Residues 50 to 57 (GFDSHLHS) lie on the Cytoplasmic side of the membrane. Residues 58–79 (PMYFFLSNLAFVDICFTSTTVP) form a helical membrane-spanning segment. Over 80 to 100 (QMVVNILTGTKTISFAGCLTQ) the chain is Extracellular. A disulfide bridge connects residues cysteine 97 and cysteine 189. The helical transmembrane segment at 101–120 (LFFFVSFVNMDSLLLCVMAY) threads the bilayer. Over 121–139 (DRYVAICHPLHYTARMNLC) the chain is Cytoplasmic. A helical transmembrane segment spans residues 140-158 (LCVQLVAGLWLVTYLHALL). Residues 159–195 (HTVLIAQLSFCASNIIHHFFCDLNPLLQLSCSDVSFN) lie on the Extracellular side of the membrane. A helical membrane pass occupies residues 196-219 (VMIIFAVGGLLALTPLVCILVSYG). Residues 220–236 (LIFSTVLKITSTQGKQR) are Cytoplasmic-facing. The helical transmembrane segment at 237–259 (AVSTCSCHLSVVVLFYGTAIAVY) threads the bilayer. The Extracellular portion of the chain corresponds to 260 to 272 (FSPSSPHMPESDT). The chain crosses the membrane as a helical span at residues 273-292 (LSTIMYSMVAPMLNPFIYTL). Residues 293–314 (RNRDMKRGLQKMLLKCTVFQQQ) lie on the Cytoplasmic side of the membrane.

This sequence belongs to the G-protein coupled receptor 1 family.

It localises to the cell membrane. In terms of biological role, odorant receptor. The polypeptide is Olfactory receptor 1C1 (OR1C1) (Homo sapiens (Human)).